Here is a 491-residue protein sequence, read N- to C-terminus: Cell division control protein 1 (491 aa).

The segment at 1–33 is disordered; it reads MVYRNRSKSVLSTHSKKSDDKAHYKSRSKKKSK. At 1-39 the chain is on the cytoplasmic side; that stretch reads MVYRNRSKSVLSTHSKKSDDKAHYKSRSKKKSKSRSKKR. Positions 24 to 33 are enriched in basic residues; it reads YKSRSKKKSK. Residues 40 to 60 form a helical membrane-spanning segment; it reads LRIYWRYISIVWILWLGLISY. Residues 61 to 391 lie on the Extracellular side of the membrane; that stretch reads YESVVVKRAM…LCYMPDPYKA (331 aa). Asp95, Asp144, Asn183, and His323 together coordinate a divalent metal cation. The chain crosses the membrane as a helical span at residues 392 to 412; it reads IRMYLWGLLFSAAFIAYMHFF. At 413-465 the chain is on the cytoplasmic side; it reads PKSFNNRVATIMNRVFTRPDGNTSDLPLPTSISKSKSKKSLTHSKYAVNDTRS. Residues 466-486 traverse the membrane as a helical segment; it reads IKQFLVNAIVLFVSVMPIFIY. Topologically, residues 487–491 are extracellular; it reads FYTVV.

It belongs to the metallophosphoesterase superfamily. MPPE1 family. Requires a divalent metal cation as cofactor.

The protein localises to the membrane. Its function is as follows. Probable metallophosphoesterase which may participate in recombinational repair of double -strand breaks. The chain is Cell division control protein 1 (CDC1) from Saccharomyces cerevisiae (strain ATCC 204508 / S288c) (Baker's yeast).